Reading from the N-terminus, the 475-residue chain is MALAKTDMLVSPLQISDPFSSFPHSPTMDNYPKLDGAEQFDHHAADAFSEMSLSNEKAVLESSYANHTTRLPSLTYTGRFSLEPAPNSSNTLWPEPLFSLVSGLVGMANVSSSSAPSSSPSSSSSSSSSSSSQSPPLSCSVQSNESSPIYSAAPTFPNSSPEMFPDHSPQPFQNASTASIPYPPPAYPVSKTTFQVPMIPDYLFPQQQGDVSLVSADQKPFQAMENRTQQPSLTPLSTIKAFATQTSQDLKTINSTYQSQIIKPSRMRKYPNRPSKTPPHERPYACPVESCDRRFSRSDELTRHIRIHTGQKPFQCRICMRNFSRSDHLTTHIRTHTGEKPFACDICGRKFARSDERKRHTKIHLRQKDKKADKATPVSIASPVSAYSPSASTSYPSPVPTSYSSPVSSCYPSPVHSSFPSPTTAVTYPSVTSTFQTQCITSFPSSIVTNSYSSPVSSALSDMSVTYSPRTIEIC.

Disordered stretches follow at residues 109 to 180 (NVSS…TASI) and 264 to 285 (PSRM…RPYA). A compositionally biased stretch (low complexity) spans 111–140 (SSSSAPSSSPSSSSSSSSSSSSQSPPLSCS). A compositionally biased stretch (polar residues) spans 170–179 (QPFQNASTAS). 3 C2H2-type zinc fingers span residues 284 to 308 (YACP…IRIH), 314 to 336 (FQCR…IRTH), and 342 to 364 (FACD…TKIH). A disordered region spans residues 355–379 (DERKRHTKIHLRQKDKKADKATPVS). Over residues 359-369 (RHTKIHLRQKD) the composition is skewed to basic residues.

It belongs to the EGR C2H2-type zinc-finger protein family.

The protein localises to the nucleus. It is found in the cytoplasm. Transcriptional regulator. Recognizes and binds to the DNA sequence 5'-GCG(T/G)GGGCG-3'(EGR-site) in the promoter region of target genes. Binds double-stranded target DNA, irrespective of the cytosine methylation status. Regulates the transcription of numerous target genes, and thereby plays an important role in regulating the response to growth factors, DNA damage, and ischemia. Plays a role in the regulation of cell survival, proliferation and cell death. Mediates responses to ischemia and hypoxia; regulates the expression of proteins that are involved in inflammatory processes. Plays a role in regulating the expression of circadian clock genes. The sequence is that of Early growth response protein 1-B (egr1-b) from Xenopus laevis (African clawed frog).